The sequence spans 262 residues: Phosphonates import ATP-binding protein PhnC (262 aa).

The ABC transporter domain maps to 5–253; the sequence is IRVEKLAKTF…RFDHLYRSIN (249 aa). ATP is bound at residue 37 to 44; the sequence is GPSGSGKS.

It belongs to the ABC transporter superfamily. Phosphonates importer (TC 3.A.1.9.1) family. The complex is composed of two ATP-binding proteins (PhnC), two transmembrane proteins (PhnE) and a solute-binding protein (PhnD).

The protein resides in the cell inner membrane. It catalyses the reaction phosphonate(out) + ATP + H2O = phosphonate(in) + ADP + phosphate + H(+). Part of the ABC transporter complex PhnCDE involved in phosphonates import. Responsible for energy coupling to the transport system. The polypeptide is Phosphonates import ATP-binding protein PhnC (Escherichia coli (strain UTI89 / UPEC)).